Here is a 504-residue protein sequence, read N- to C-terminus: ATP synthase subunit alpha, chloroplastic (504 aa).

Position 169–176 (169–176 (GDRQTGKT)) interacts with ATP.

It belongs to the ATPase alpha/beta chains family. In terms of assembly, F-type ATPases have 2 components, CF(1) - the catalytic core - and CF(0) - the membrane proton channel. CF(1) has five subunits: alpha(3), beta(3), gamma(1), delta(1), epsilon(1). CF(0) has four main subunits: a, b, b' and c.

Its subcellular location is the plastid. The protein resides in the chloroplast thylakoid membrane. It catalyses the reaction ATP + H2O + 4 H(+)(in) = ADP + phosphate + 5 H(+)(out). In terms of biological role, produces ATP from ADP in the presence of a proton gradient across the membrane. The alpha chain is a regulatory subunit. This chain is ATP synthase subunit alpha, chloroplastic, found in Stigeoclonium helveticum (Green alga).